Here is a 300-residue protein sequence, read N- to C-terminus: 4-hydroxy-tetrahydrodipicolinate synthase (300 aa).

T55 contacts pyruvate. Residue Y143 is the Proton donor/acceptor of the active site. K171 functions as the Schiff-base intermediate with substrate in the catalytic mechanism. I211 is a pyruvate binding site.

Belongs to the DapA family. Homotetramer; dimer of dimers.

It is found in the cytoplasm. The catalysed reaction is L-aspartate 4-semialdehyde + pyruvate = (2S,4S)-4-hydroxy-2,3,4,5-tetrahydrodipicolinate + H2O + H(+). It functions in the pathway amino-acid biosynthesis; L-lysine biosynthesis via DAP pathway; (S)-tetrahydrodipicolinate from L-aspartate: step 3/4. Catalyzes the condensation of (S)-aspartate-beta-semialdehyde [(S)-ASA] and pyruvate to 4-hydroxy-tetrahydrodipicolinate (HTPA). The polypeptide is 4-hydroxy-tetrahydrodipicolinate synthase (Mycolicibacterium paratuberculosis (strain ATCC BAA-968 / K-10) (Mycobacterium paratuberculosis)).